We begin with the raw amino-acid sequence, 152 residues long: D-aminoacyl-tRNA deacylase (152 aa).

Residues 142 to 143 carry the Gly-cisPro motif, important for rejection of L-amino acids motif; it reads GP.

This sequence belongs to the DTD family. As to quaternary structure, homodimer.

Its subcellular location is the cytoplasm. It catalyses the reaction glycyl-tRNA(Ala) + H2O = tRNA(Ala) + glycine + H(+). The enzyme catalyses a D-aminoacyl-tRNA + H2O = a tRNA + a D-alpha-amino acid + H(+). In terms of biological role, an aminoacyl-tRNA editing enzyme that deacylates mischarged D-aminoacyl-tRNAs. Also deacylates mischarged glycyl-tRNA(Ala), protecting cells against glycine mischarging by AlaRS. Acts via tRNA-based rather than protein-based catalysis; rejects L-amino acids rather than detecting D-amino acids in the active site. By recycling D-aminoacyl-tRNA to D-amino acids and free tRNA molecules, this enzyme counteracts the toxicity associated with the formation of D-aminoacyl-tRNA entities in vivo and helps enforce protein L-homochirality. This is D-aminoacyl-tRNA deacylase from Burkholderia multivorans (strain ATCC 17616 / 249).